An 845-amino-acid chain; its full sequence is Beta-mannosidase B (845 aa).

A glycan (N-linked (GlcNAc...) asparagine) is linked at Asn252. Residue Glu432 is the Proton donor of the active site. N-linked (GlcNAc...) asparagine glycosylation is found at Asn717 and Asn723.

This sequence belongs to the glycosyl hydrolase 2 family. Beta-mannosidase B subfamily.

It catalyses the reaction Hydrolysis of terminal, non-reducing beta-D-mannose residues in beta-D-mannosides.. The protein operates within glycan metabolism; N-glycan degradation. Functionally, exoglycosidase that cleaves the single beta-linked mannose residue from the non-reducing end of beta-mannosidic oligosaccharides of various complexity and length. Prefers mannobiose over mannotriose and has no activity against polymeric mannan. Is also severely restricted by galactosyl substitutions at the +1 subsite. The protein is Beta-mannosidase B (mndB) of Aspergillus fumigatus (strain CBS 144.89 / FGSC A1163 / CEA10) (Neosartorya fumigata).